A 143-amino-acid polypeptide reads, in one-letter code: Granulocyte-macrophage colony-stimulating factor (143 aa).

The N-terminal stretch at 1-17 (MWLQNLLLLGTVVCSFS) is a signal peptide. An O-linked (GalNAc...) threonine glycan is attached at Thr27. Residues Asn44 and Asn54 are each glycosylated (N-linked (GlcNAc...) asparagine). 2 disulfides stabilise this stretch: Cys70–Cys112 and Cys104–Cys137.

This sequence belongs to the GM-CSF family. As to quaternary structure, monomer. The signaling GM-CSF receptor complex is a dodecamer of two head-to-head hexamers of two alpha, two beta, and two ligand subunits.

Its subcellular location is the secreted. In terms of biological role, cytokine that stimulates the growth and differentiation of hematopoietic precursor cells from various lineages, including granulocytes, macrophages, eosinophils and erythrocytes. In Bos taurus (Bovine), this protein is Granulocyte-macrophage colony-stimulating factor (CSF2).